The chain runs to 1499 residues: Multidrug resistance protein CDR2 (1499 aa).

Topologically, residues Met1–Ser511 are cytoplasmic. Residues Phe148 to Gln402 form the ABC transporter 1 domain. A run of 6 helical transmembrane segments spans residues Ile512–Phe532, Gly546–Leu566, Leu596–Leu616, Gly621–Phe641, Val660–Gly680, and Phe763–Phe783. Over Asn784–Gly1193 the chain is Cytoplasmic. One can recognise an ABC transporter 2 domain in the interval Phe857–Ala1101. Residue Gly893–Thr900 participates in ATP binding. A run of 6 helical transmembrane segments spans residues Tyr1194–Phe1214, Ala1229–Val1249, Ile1279–Leu1299, Leu1315–Ile1335, Leu1354–Phe1374, and Phe1465–Leu1485.

This sequence belongs to the ABC transporter superfamily. ABCG family. PDR (TC 3.A.1.205) subfamily.

The protein resides in the membrane. Its function is as follows. Multidrug efflux transporter. Confers resistance to azole antifungal agents, to other antifungals (terbinafine, amorolfine) and to a variety of metabolic inhibitors. The polypeptide is Multidrug resistance protein CDR2 (CDR2) (Candida albicans (strain SC5314 / ATCC MYA-2876) (Yeast)).